A 340-amino-acid polypeptide reads, in one-letter code: DNA-directed RNA polymerase subunit alpha (340 aa).

An alpha N-terminal domain (alpha-NTD) region spans residues 1–238 (MADTFVAKNW…EQLTVFVNFD (238 aa)). The interval 253-340 (AKLNENLFRS…QAPAPAQPKA (88 aa)) is alpha C-terminal domain (alpha-CTD).

This sequence belongs to the RNA polymerase alpha chain family. Homodimer. The RNAP catalytic core consists of 2 alpha, 1 beta, 1 beta' and 1 omega subunit. When a sigma factor is associated with the core the holoenzyme is formed, which can initiate transcription.

The catalysed reaction is RNA(n) + a ribonucleoside 5'-triphosphate = RNA(n+1) + diphosphate. Its function is as follows. DNA-dependent RNA polymerase catalyzes the transcription of DNA into RNA using the four ribonucleoside triphosphates as substrates. The chain is DNA-directed RNA polymerase subunit alpha from Myxococcus xanthus (strain DK1622).